Consider the following 1340-residue polypeptide: DNA-directed RNA polymerase subunit beta (1340 aa).

The protein belongs to the RNA polymerase beta chain family. The RNAP catalytic core consists of 2 alpha, 1 beta, 1 beta' and 1 omega subunit. When a sigma factor is associated with the core the holoenzyme is formed, which can initiate transcription.

It catalyses the reaction RNA(n) + a ribonucleoside 5'-triphosphate = RNA(n+1) + diphosphate. In terms of biological role, DNA-dependent RNA polymerase catalyzes the transcription of DNA into RNA using the four ribonucleoside triphosphates as substrates. This chain is DNA-directed RNA polymerase subunit beta, found in Baumannia cicadellinicola subsp. Homalodisca coagulata.